Consider the following 414-residue polypeptide: Heterogeneous nuclear ribonucleoprotein F (414 aa).

Met-1 is modified (N-acetylmethionine). Met-2 carries the N-acetylmethionine; in Heterogeneous nuclear ribonucleoprotein F, N-terminally processed modification. An RRM 1 domain is found at 11-90 (FVVKLRGLPW…RYIEVFKSHR (80 aa)). Lys-72 is covalently cross-linked (Glycyl lysine isopeptide (Lys-Gly) (interchain with G-Cter in SUMO)). Residues 81–86 (RYIEVF) form an interaction with RNA region. Residue Lys-87 forms a Glycyl lysine isopeptide (Lys-Gly) (interchain with G-Cter in SUMO2) linkage. Residues Ser-104 and Ser-161 each carry the phosphoserine modification. The 78-residue stretch at 111-188 (GFVRLRGLPF…RYIEVFKSSQ (78 aa)) folds into the RRM 2 domain. Lys-167 participates in a covalent cross-link: Glycyl lysine isopeptide (Lys-Gly) (interchain with G-Cter in SUMO2). Residues 179–184 (RYIEVF) form an interaction with RNA region. Lys-185 participates in a covalent cross-link: Glycyl lysine isopeptide (Lys-Gly) (interchain with G-Cter in SUMO2). Phosphoserine is present on residues Ser-187, Ser-193, and Ser-195. Lys-200 carries the post-translational modification N6-acetyllysine; alternate. Residue Lys-200 forms a Glycyl lysine isopeptide (Lys-Gly) (interchain with G-Cter in SUMO2); alternate linkage. A Phosphothreonine modification is found at Thr-215. Lys-224 carries the post-translational modification N6-acetyllysine; alternate. Lys-224 is covalently cross-linked (Glycyl lysine isopeptide (Lys-Gly) (interchain with G-Cter in SUMO2); alternate). Position 265 is a phosphoserine (Ser-265). An RRM 3 domain is found at 289–366 (HCVHMRGLPY…IELFLNSTTG (78 aa)). The tract at residues 355–360 (RYIELF) is interaction with RNA.

As to quaternary structure, identified in the spliceosome C complex. Interacts with AGO1, AGO2, TBP and TXNL4/DIM1. Sumoylated.

It localises to the nucleus. The protein resides in the nucleoplasm. Functionally, component of the heterogeneous nuclear ribonucleoprotein (hnRNP) complexes which provide the substrate for the processing events that pre-mRNAs undergo before becoming functional, translatable mRNAs in the cytoplasm. Plays a role in the regulation of alternative splicing events. Binds G-rich sequences in pre-mRNAs and keeps target RNA in an unfolded state. This is Heterogeneous nuclear ribonucleoprotein F (HNRNPF) from Bos taurus (Bovine).